Reading from the N-terminus, the 906-residue chain is Alanine--tRNA ligase (906 aa).

Positions 600, 604, 703, and 707 each coordinate Zn(2+).

It belongs to the class-II aminoacyl-tRNA synthetase family. In terms of assembly, homodimer. Zn(2+) is required as a cofactor.

It localises to the cytoplasm. It carries out the reaction tRNA(Ala) + L-alanine + ATP = L-alanyl-tRNA(Ala) + AMP + diphosphate. Functionally, catalyzes the attachment of alanine to tRNA(Ala) in a two-step reaction: alanine is first activated by ATP to form Ala-AMP and then transferred to the acceptor end of tRNA(Ala). Incorrectly charged aminoacyl-tRNA(Ala) is also edited in situ by the editing domain. This Archaeoglobus fulgidus (strain ATCC 49558 / DSM 4304 / JCM 9628 / NBRC 100126 / VC-16) protein is Alanine--tRNA ligase (alaS).